The following is a 349-amino-acid chain: Probable tRNA pseudouridine synthase B (349 aa).

D41 serves as the catalytic Nucleophile. The region spanning 207 to 279 is the PUA domain; sequence YPKVIVKETA…KVIDIDNVLI (73 aa). The segment covering 300–309 has biased composition (basic and acidic residues); sequence IPVQKPERKL. A disordered region spans residues 300–349; that stretch reads IPVQKPERKLHGNLQGSQEWKDTGNRGNPKRGGTGSKGFSSGFRKRKAKR.

The protein belongs to the pseudouridine synthase TruB family. Type 2 subfamily.

The catalysed reaction is uridine(55) in tRNA = pseudouridine(55) in tRNA. Functionally, could be responsible for synthesis of pseudouridine from uracil-55 in the psi GC loop of transfer RNAs. This Picrophilus torridus (strain ATCC 700027 / DSM 9790 / JCM 10055 / NBRC 100828 / KAW 2/3) protein is Probable tRNA pseudouridine synthase B.